The sequence spans 265 residues: Lipopolysaccharide core heptose(I) kinase WaaP (265 aa).

Aspartate 162 is a catalytic residue.

The protein belongs to the protein kinase superfamily. KdkA/RfaP family. Requires Mg(2+) as cofactor.

It is found in the cell inner membrane. It carries out the reaction an L-alpha-D-Hep-(1-&gt;3)-L-alpha-D-Hep-(1-&gt;5)-[alpha-Kdo-(2-&gt;4)]-alpha-Kdo-(2-&gt;6)-lipid A + ATP = an L-alpha-D-Hep-(1-&gt;3)-4-O-phospho-L-alpha-D-Hep-(1-&gt;5)-[alpha-Kdo-(2-&gt;4)]-alpha-Kdo-(2-&gt;6)-lipid A + ADP + H(+). The enzyme catalyses L-alpha-D-Hep-(1-&gt;3)-L-alpha-D-Hep-(1-&gt;5)-[alpha-Kdo-(2-&gt;4)]-alpha-Kdo-(2-&gt;6)-lipid A (E. coli) + ATP = L-alpha-D-Hep-(1-&gt;3)-4-O-phospho-L-alpha-D-Hep-(1-&gt;5)-[alpha-Kdo-(2-&gt;4)]-alpha-Kdo-(2-&gt;6)-lipid A (E. coli) + ADP + H(+). The protein operates within bacterial outer membrane biogenesis; LPS core biosynthesis. Its function is as follows. Kinase involved in the biosynthesis of the core oligosaccharide region of lipopolysaccharide (LPS). Catalyzes the phosphorylation of heptose I (HepI), the first heptose added to the Kdo2-lipid A module. This Escherichia coli protein is Lipopolysaccharide core heptose(I) kinase WaaP.